We begin with the raw amino-acid sequence, 142 residues long: Large ribosomal subunit protein uL13 (142 aa).

It belongs to the universal ribosomal protein uL13 family. As to quaternary structure, part of the 50S ribosomal subunit.

This protein is one of the early assembly proteins of the 50S ribosomal subunit, although it is not seen to bind rRNA by itself. It is important during the early stages of 50S assembly. This is Large ribosomal subunit protein uL13 from Serratia proteamaculans (strain 568).